We begin with the raw amino-acid sequence, 275 residues long: Succinate dehydrogenase [ubiquinone] iron-sulfur subunit, mitochondrial (275 aa).

Residues 1–24 constitute a mitochondrion transit peptide; it reads MFSRRIQVLSPFLKHFVNRNARMM. The 2Fe-2S ferredoxin-type domain occupies 57–137; the sequence is PEVKPKLQKY…PTKIYPLPHC (81 aa). [2Fe-2S] cluster contacts are provided by cysteine 98, cysteine 103, cysteine 106, and cysteine 118. The 4Fe-4S ferredoxin-type domain maps to 178–208; that stretch reads DRAKLDGLYECILCACCSTSCPSYWWNSEEY. [4Fe-4S] cluster is bound by residues cysteine 188, cysteine 191, and cysteine 194. Cysteine 198 is a [3Fe-4S] cluster binding site. Tryptophan 203 is a binding site for a ubiquinone. The [3Fe-4S] cluster site is built by cysteine 245 and cysteine 251. Residue cysteine 255 coordinates [4Fe-4S] cluster.

It belongs to the succinate dehydrogenase/fumarate reductase iron-sulfur protein family. Component of complex II composed of four subunits: a flavoprotein (FP), an iron-sulfur protein (IP), and a cytochrome b composed of a large and a small subunit. It depends on [2Fe-2S] cluster as a cofactor. [3Fe-4S] cluster serves as cofactor. Requires [4Fe-4S] cluster as cofactor.

The protein resides in the mitochondrion inner membrane. The catalysed reaction is a quinone + succinate = fumarate + a quinol. Its pathway is carbohydrate metabolism; tricarboxylic acid cycle; fumarate from succinate (eukaryal route): step 1/1. Iron-sulfur protein (IP) subunit of succinate dehydrogenase (SDH) that is involved in complex II of the mitochondrial electron transport chain and is responsible for transferring electrons from succinate to ubiquinone (coenzyme Q). The protein is Succinate dehydrogenase [ubiquinone] iron-sulfur subunit, mitochondrial (sdh2) of Schizosaccharomyces pombe (strain 972 / ATCC 24843) (Fission yeast).